A 215-amino-acid chain; its full sequence is ATP-dependent Clp protease proteolytic subunit 3 (215 aa).

The active-site Nucleophile is S119. The active site involves H144.

It belongs to the peptidase S14 family. In terms of assembly, fourteen ClpP subunits assemble into 2 heptameric rings which stack back to back to give a disk-like structure with a central cavity, resembling the structure of eukaryotic proteasomes.

Its subcellular location is the cytoplasm. The catalysed reaction is Hydrolysis of proteins to small peptides in the presence of ATP and magnesium. alpha-casein is the usual test substrate. In the absence of ATP, only oligopeptides shorter than five residues are hydrolyzed (such as succinyl-Leu-Tyr-|-NHMec, and Leu-Tyr-Leu-|-Tyr-Trp, in which cleavage of the -Tyr-|-Leu- and -Tyr-|-Trp bonds also occurs).. Its function is as follows. Cleaves peptides in various proteins in a process that requires ATP hydrolysis. Has a chymotrypsin-like activity. Plays a major role in the degradation of misfolded proteins. The polypeptide is ATP-dependent Clp protease proteolytic subunit 3 (Prochlorococcus marinus subsp. pastoris (strain CCMP1986 / NIES-2087 / MED4)).